The following is a 149-amino-acid chain: MKLILTAPVAKLGVPGDIVEVKDGYGRNYLLPQNYAIKWTRGAEAQIKDITRARKAKEIKSKEEAEQIRSQLEHLVVQVTVQVGENGRLFGAVTPGDIALAVRKAGGPALEKRSIEITKPIKTIGKHTVGVKLHDAIKGHVTVETVPAA.

It belongs to the bacterial ribosomal protein bL9 family.

Functionally, binds to the 23S rRNA. This Cutibacterium acnes (strain DSM 16379 / KPA171202) (Propionibacterium acnes) protein is Large ribosomal subunit protein bL9.